A 98-amino-acid polypeptide reads, in one-letter code: uncharacterized protein (98 aa).

Basic residues predominate over residues 19–31; that stretch reads RRMSKRSKNKAKK. The tract at residues 19–47 is disordered; sequence RRMSKRSKNKAKKERVPVEDRPPTPMPTS.

It belongs to the lymphocryptovirus BNLF2B family.

This is an uncharacterized protein from Epstein-Barr virus (strain AG876) (HHV-4).